The primary structure comprises 310 residues: Homoserine kinase (310 aa).

91 to 101 (PIGSGLGSSAC) is a binding site for ATP.

This sequence belongs to the GHMP kinase family. Homoserine kinase subfamily.

It is found in the cytoplasm. The enzyme catalyses L-homoserine + ATP = O-phospho-L-homoserine + ADP + H(+). Its pathway is amino-acid biosynthesis; L-threonine biosynthesis; L-threonine from L-aspartate: step 4/5. In terms of biological role, catalyzes the ATP-dependent phosphorylation of L-homoserine to L-homoserine phosphate. The chain is Homoserine kinase from Escherichia coli O6:H1 (strain CFT073 / ATCC 700928 / UPEC).